A 534-amino-acid polypeptide reads, in one-letter code: MADPQATNGTGAVCAERDASDVGDVSDVGDARDEGAGRVVAVRGAVVDVAFDGGALPALNEALTIPVDGAAPILAEVHAHLSDAAVRALALGPTGGLRRGAAVRATGGPIRVPVGDAVLGRLLSVTGAPGDDGAALAADVERRPIHRGAPLLAEQKSANALFATGIKVIDLLAPLAQGGKAAMFGGAGVGKTVFVMELIHAMVERYRGISVFAGIGERSREGHEMLLDMRGSGVLGRTVLVYGQMNEPPGARWRVPLTALAIAEYFRDERAQNVLLLMDNVFRFVQAGAEVSGLLGRLPSRVGYQPTLASEVAALQERIASVEGAAVTAIEAVYVPADDFTDPAVTAIAAHVDSMVVLSRAMAAEGMYPAIDPVASSSILLDPLVVGEAHVEVAIEVRRVIEHYRELQDVIALLGIDELGADDRRLVGRARRLQRFLTQPFAVTEAFTGQAGASVEIADTIAGCRAILRGDCDDWRESSLYMVGTLDDARRKEAAAREADARREAAAAASGAGPGTTSDPASGSAEPQGARHGR.

185–192 (GGAGVGKT) provides a ligand contact to ATP. A compositionally biased stretch (basic and acidic residues) spans 494-505 (AAAREADARREA). The interval 494–534 (AAAREADARREAAAAASGAGPGTTSDPASGSAEPQGARHGR) is disordered.

Belongs to the ATPase alpha/beta chains family. As to quaternary structure, F-type ATPases have 2 components, CF(1) - the catalytic core - and CF(0) - the membrane proton channel. CF(1) has five subunits: alpha(3), beta(3), gamma(1), delta(1), epsilon(1). CF(0) has three main subunits: a(1), b(2) and c(9-12). The alpha and beta chains form an alternating ring which encloses part of the gamma chain. CF(1) is attached to CF(0) by a central stalk formed by the gamma and epsilon chains, while a peripheral stalk is formed by the delta and b chains.

The protein resides in the cell inner membrane. It carries out the reaction ATP + H2O + 4 H(+)(in) = ADP + phosphate + 5 H(+)(out). In terms of biological role, produces ATP from ADP in the presence of a proton gradient across the membrane. The catalytic sites are hosted primarily by the beta subunits. The chain is ATP synthase subunit beta 2 from Burkholderia mallei (strain NCTC 10247).